The primary structure comprises 344 residues: Aspartate-semialdehyde dehydrogenase (344 aa).

NADP(+) is bound by residues 10–13 (TGQV) and 38–39 (RS). Residue Arg-101 participates in phosphate binding. Residue Cys-131 is the Acyl-thioester intermediate of the active site. A substrate-binding site is contributed by Gln-158. 161–162 (SG) lines the NADP(+) pocket. Lys-228 serves as a coordination point for phosphate. Arg-250 contacts substrate. His-257 serves as the catalytic Proton acceptor. Asn-326 is an NADP(+) binding site.

This sequence belongs to the aspartate-semialdehyde dehydrogenase family. Homodimer.

It carries out the reaction L-aspartate 4-semialdehyde + phosphate + NADP(+) = 4-phospho-L-aspartate + NADPH + H(+). Its pathway is amino-acid biosynthesis; L-lysine biosynthesis via DAP pathway; (S)-tetrahydrodipicolinate from L-aspartate: step 2/4. It functions in the pathway amino-acid biosynthesis; L-methionine biosynthesis via de novo pathway; L-homoserine from L-aspartate: step 2/3. It participates in amino-acid biosynthesis; L-threonine biosynthesis; L-threonine from L-aspartate: step 2/5. Functionally, catalyzes the NADPH-dependent formation of L-aspartate-semialdehyde (L-ASA) by the reductive dephosphorylation of L-aspartyl-4-phosphate. The sequence is that of Aspartate-semialdehyde dehydrogenase from Corynebacterium melassecola.